A 471-amino-acid polypeptide reads, in one-letter code: Elongation factor 1-alpha (471 aa).

Positions 10–239 constitute a tr-type G domain; that stretch reads KPRLNACFIG…EALNYQDVPE (230 aa). Residues 19–26 form a G1 region; that stretch reads GHVDSGKS. 19–26 serves as a coordination point for GTP; that stretch reads GHVDSGKS. Residues 75 to 79 are G2; that stretch reads GITIT. Positions 96–99 are G3; sequence DCPG. GTP is bound by residues 96–100 and 156–159; these read DCPGH and NKMD. Residues 156-159 are G4; sequence NKMD. A G5 region spans residues 196–198; that stretch reads SAF.

Belongs to the TRAFAC class translation factor GTPase superfamily. Classic translation factor GTPase family. EF-Tu/EF-1A subfamily. In terms of assembly, component of the eukaryotic elongation factor 1 complex (eEF1).

Its subcellular location is the cytoplasm. It functions in the pathway protein biosynthesis; polypeptide chain elongation. Its function is as follows. GTP-binding component of the eukaryotic elongation factor 1 complex (eEF1). In its active GTP-bound form, binds to and delivers aminoacyl-tRNA to the A-site of ribosomes during protein biosynthesis. In the presence of a correct codon-anticodon match between the aminoacyl-tRNA and the A-site codon of the ribosome-bound mRNA, the ribosome acts as a GTPase activator and the GTP is hydrolyzed. The inactive GDP-bound form leaves the ribosome and must be recycled by its guanine nucleotide exchange factor (GEF) (eEF1B subcomplex) before binding another molecule of aminoacyl-tRNA. Required for nuclear export of aminoacyl-tRNAs. May also be involved in translational quality control by targeting cotranslationally damaged proteins to the proteasome. The sequence is that of Elongation factor 1-alpha (TEF1) from Encephalitozoon cuniculi (strain GB-M1) (Microsporidian parasite).